The following is a 326-amino-acid chain: DNA-directed RNA polymerase subunit alpha (326 aa).

The segment at 1–232 (MQSATEFLKP…SQLSVFADLE (232 aa)) is alpha N-terminal domain (alpha-NTD). Residues 246 to 326 (VDPLLLRPVD…NWPPAGLERP (81 aa)) are alpha C-terminal domain (alpha-CTD).

The protein belongs to the RNA polymerase alpha chain family. Homodimer. The RNAP catalytic core consists of 2 alpha, 1 beta, 1 beta' and 1 omega subunit. When a sigma factor is associated with the core the holoenzyme is formed, which can initiate transcription.

It carries out the reaction RNA(n) + a ribonucleoside 5'-triphosphate = RNA(n+1) + diphosphate. DNA-dependent RNA polymerase catalyzes the transcription of DNA into RNA using the four ribonucleoside triphosphates as substrates. This Thiobacillus denitrificans (strain ATCC 25259 / T1) protein is DNA-directed RNA polymerase subunit alpha.